We begin with the raw amino-acid sequence, 417 residues long: NADH-quinone oxidoreductase subunit D (417 aa).

Belongs to the complex I 49 kDa subunit family. NDH-1 is composed of 14 different subunits. Subunits NuoB, C, D, E, F, and G constitute the peripheral sector of the complex.

Its subcellular location is the cell inner membrane. The enzyme catalyses a quinone + NADH + 5 H(+)(in) = a quinol + NAD(+) + 4 H(+)(out). Its function is as follows. NDH-1 shuttles electrons from NADH, via FMN and iron-sulfur (Fe-S) centers, to quinones in the respiratory chain. The immediate electron acceptor for the enzyme in this species is believed to be ubiquinone. Couples the redox reaction to proton translocation (for every two electrons transferred, four hydrogen ions are translocated across the cytoplasmic membrane), and thus conserves the redox energy in a proton gradient. This Ruthia magnifica subsp. Calyptogena magnifica protein is NADH-quinone oxidoreductase subunit D.